The following is a 532-amino-acid chain: CTP synthase (532 aa).

The segment at 1-267 (MAKFVFVTGG…HGLVLDQLQI (267 aa)) is amidoligase domain. Ser13 lines the CTP pocket. UTP is bound at residue Ser13. Position 14–19 (14–19 (GLGKGI)) interacts with ATP. Tyr54 is an L-glutamine binding site. An ATP-binding site is contributed by Asp71. 2 residues coordinate Mg(2+): Asp71 and Glu141. Residues 148-150 (DIE), 188-193 (KTKPIQ), and Lys224 contribute to the CTP site. Residues 188–193 (KTKPIQ) and Lys224 each bind UTP. In terms of domain architecture, Glutamine amidotransferase type-1 spans 292-532 (EVTFVGKYIE…GFVEAIVNNK (241 aa)). Gly354 lines the L-glutamine pocket. Cys381 (nucleophile; for glutamine hydrolysis) is an active-site residue. L-glutamine contacts are provided by residues 382–385 (LGMQ), Glu405, and Arg462. Active-site residues include His507 and Glu509.

Belongs to the CTP synthase family. In terms of assembly, homotetramer.

The enzyme catalyses UTP + L-glutamine + ATP + H2O = CTP + L-glutamate + ADP + phosphate + 2 H(+). It catalyses the reaction L-glutamine + H2O = L-glutamate + NH4(+). It carries out the reaction UTP + NH4(+) + ATP = CTP + ADP + phosphate + 2 H(+). It functions in the pathway pyrimidine metabolism; CTP biosynthesis via de novo pathway; CTP from UDP: step 2/2. Its activity is regulated as follows. Allosterically activated by GTP, when glutamine is the substrate; GTP has no effect on the reaction when ammonia is the substrate. The allosteric effector GTP functions by stabilizing the protein conformation that binds the tetrahedral intermediate(s) formed during glutamine hydrolysis. Inhibited by the product CTP, via allosteric rather than competitive inhibition. Catalyzes the ATP-dependent amination of UTP to CTP with either L-glutamine or ammonia as the source of nitrogen. Regulates intracellular CTP levels through interactions with the four ribonucleotide triphosphates. This Mesoplasma florum (strain ATCC 33453 / NBRC 100688 / NCTC 11704 / L1) (Acholeplasma florum) protein is CTP synthase.